We begin with the raw amino-acid sequence, 172 residues long: uncharacterized protein (172 aa).

This is an uncharacterized protein from Bacillus subtilis (strain 168).